A 361-amino-acid polypeptide reads, in one-letter code: Phospho-N-acetylmuramoyl-pentapeptide-transferase (361 aa).

10 consecutive transmembrane segments (helical) span residues alanine 26–glutamate 46, threonine 71–alanine 91, phenylalanine 97–tyrosine 117, isoleucine 134–asparagine 154, glycine 168–serine 188, glycine 200–alanine 220, glycine 236–tryptophan 256, isoleucine 264–phenylalanine 284, valine 290–phenylalanine 310, and lysine 338–leucine 358.

This sequence belongs to the glycosyltransferase 4 family. MraY subfamily. Mg(2+) is required as a cofactor.

The protein resides in the cell membrane. The catalysed reaction is UDP-N-acetyl-alpha-D-muramoyl-L-alanyl-gamma-D-glutamyl-meso-2,6-diaminopimeloyl-D-alanyl-D-alanine + di-trans,octa-cis-undecaprenyl phosphate = di-trans,octa-cis-undecaprenyl diphospho-N-acetyl-alpha-D-muramoyl-L-alanyl-D-glutamyl-meso-2,6-diaminopimeloyl-D-alanyl-D-alanine + UMP. The protein operates within cell wall biogenesis; peptidoglycan biosynthesis. Catalyzes the initial step of the lipid cycle reactions in the biosynthesis of the cell wall peptidoglycan: transfers peptidoglycan precursor phospho-MurNAc-pentapeptide from UDP-MurNAc-pentapeptide onto the lipid carrier undecaprenyl phosphate, yielding undecaprenyl-pyrophosphoryl-MurNAc-pentapeptide, known as lipid I. In Endomicrobium trichonymphae, this protein is Phospho-N-acetylmuramoyl-pentapeptide-transferase.